The following is a 320-amino-acid chain: Aspartate carbamoyltransferase catalytic subunit (320 aa).

Carbamoyl phosphate-binding residues include arginine 68 and threonine 69. Lysine 96 is an L-aspartate binding site. Carbamoyl phosphate-binding residues include arginine 118, histidine 148, and glutamine 151. Residues arginine 181 and arginine 236 each coordinate L-aspartate. Positions 277 and 278 each coordinate carbamoyl phosphate.

It belongs to the aspartate/ornithine carbamoyltransferase superfamily. ATCase family. In terms of assembly, heterododecamer (2C3:3R2) of six catalytic PyrB chains organized as two trimers (C3), and six regulatory PyrI chains organized as three dimers (R2).

The enzyme catalyses carbamoyl phosphate + L-aspartate = N-carbamoyl-L-aspartate + phosphate + H(+). Its pathway is pyrimidine metabolism; UMP biosynthesis via de novo pathway; (S)-dihydroorotate from bicarbonate: step 2/3. In terms of biological role, catalyzes the condensation of carbamoyl phosphate and aspartate to form carbamoyl aspartate and inorganic phosphate, the committed step in the de novo pyrimidine nucleotide biosynthesis pathway. The chain is Aspartate carbamoyltransferase catalytic subunit from Polaromonas naphthalenivorans (strain CJ2).